Here is a 172-residue protein sequence, read N- to C-terminus: Large ribosomal subunit protein uL10 (172 aa).

It belongs to the universal ribosomal protein uL10 family. In terms of assembly, part of the ribosomal stalk of the 50S ribosomal subunit. The N-terminus interacts with L11 and the large rRNA to form the base of the stalk. The C-terminus forms an elongated spine to which L12 dimers bind in a sequential fashion forming a multimeric L10(L12)X complex.

In terms of biological role, forms part of the ribosomal stalk, playing a central role in the interaction of the ribosome with GTP-bound translation factors. This chain is Large ribosomal subunit protein uL10, found in Leifsonia xyli subsp. xyli (strain CTCB07).